We begin with the raw amino-acid sequence, 127 residues long: Small ribosomal subunit protein eS6 (127 aa).

It belongs to the eukaryotic ribosomal protein eS6 family.

The protein is Small ribosomal subunit protein eS6 of Picrophilus torridus (strain ATCC 700027 / DSM 9790 / JCM 10055 / NBRC 100828 / KAW 2/3).